An 86-amino-acid chain; its full sequence is Small ribosomal subunit protein uS17 (86 aa).

Belongs to the universal ribosomal protein uS17 family. In terms of assembly, part of the 30S ribosomal subunit.

One of the primary rRNA binding proteins, it binds specifically to the 5'-end of 16S ribosomal RNA. The protein is Small ribosomal subunit protein uS17 of Lactococcus lactis subsp. cremoris (strain SK11).